The primary structure comprises 253 residues: Ribosome maturation factor RimP (253 aa).

Basic and acidic residues predominate over residues 186–199 (RRGKAAEREKKRDL). A disordered region spans residues 186–253 (RRGKAAEREK…RARRGEIDPD (68 aa)). Positions 201 to 216 (LAPPLAPHAKPAAQAK) are enriched in low complexity. Basic and acidic residues predominate over residues 240–253 (LAADRARRGEIDPD).

The protein belongs to the RimP family.

The protein resides in the cytoplasm. Required for maturation of 30S ribosomal subunits. The polypeptide is Ribosome maturation factor RimP (Bradyrhizobium sp. (strain BTAi1 / ATCC BAA-1182)).